We begin with the raw amino-acid sequence, 217 residues long: ATP-dependent Clp protease proteolytic subunit 3 (217 aa).

Over residues 1–13 the composition is skewed to low complexity; that stretch reads MSPFTAGPAPART. The interval 1–23 is disordered; it reads MSPFTAGPAPARTPRAEEGDTPA. S108 serves as the catalytic Nucleophile. The active site involves H133.

Belongs to the peptidase S14 family. In terms of assembly, fourteen ClpP subunits assemble into 2 heptameric rings which stack back to back to give a disk-like structure with a central cavity, resembling the structure of eukaryotic proteasomes.

The protein resides in the cytoplasm. The catalysed reaction is Hydrolysis of proteins to small peptides in the presence of ATP and magnesium. alpha-casein is the usual test substrate. In the absence of ATP, only oligopeptides shorter than five residues are hydrolyzed (such as succinyl-Leu-Tyr-|-NHMec, and Leu-Tyr-Leu-|-Tyr-Trp, in which cleavage of the -Tyr-|-Leu- and -Tyr-|-Trp bonds also occurs).. In terms of biological role, cleaves peptides in various proteins in a process that requires ATP hydrolysis. Has a chymotrypsin-like activity. Plays a major role in the degradation of misfolded proteins. In Streptomyces coelicolor (strain ATCC BAA-471 / A3(2) / M145), this protein is ATP-dependent Clp protease proteolytic subunit 3.